We begin with the raw amino-acid sequence, 359 residues long: Fructose-bisphosphate aldolase class 2 (359 aa).

K9 is modified (N6-acetyllysine). S62 lines the D-glyceraldehyde 3-phosphate pocket. D110 functions as the Proton donor in the catalytic mechanism. Zn(2+) is bound by residues H111, D145, E175, and H227. Residue G228 coordinates dihydroxyacetone phosphate. Residue H265 coordinates Zn(2+). Dihydroxyacetone phosphate contacts are provided by residues G266–S268 and N287–T290.

Belongs to the class II fructose-bisphosphate aldolase family. As to quaternary structure, homodimer. The cofactor is Zn(2+).

It catalyses the reaction beta-D-fructose 1,6-bisphosphate = D-glyceraldehyde 3-phosphate + dihydroxyacetone phosphate. The protein operates within carbohydrate degradation; glycolysis; D-glyceraldehyde 3-phosphate and glycerone phosphate from D-glucose: step 4/4. In terms of biological role, catalyzes the aldol condensation of dihydroxyacetone phosphate (DHAP or glycerone-phosphate) with glyceraldehyde 3-phosphate (G3P) to form fructose 1,6-bisphosphate (FBP) in gluconeogenesis and the reverse reaction in glycolysis. This chain is Fructose-bisphosphate aldolase class 2 (fbaA), found in Escherichia coli O157:H7.